The primary structure comprises 154 residues: MRILGIDPGLARVGYGVIDTSGGHQRMLDCGIIRTDPGRSDGERMVEIASDLRQLIRAWRPELAAVEKFFFYRSSNTINVVQARGVVMMTLARFKVPVVEFPPMQIKLALAGFGHAEKDEVLEAVMRELDLTEPPRPDDAADALAVALTGWFQR.

Residues Asp7, Glu67, and Asp139 contribute to the active site. Mg(2+) contacts are provided by Asp7, Glu67, and Asp139.

This sequence belongs to the RuvC family. As to quaternary structure, homodimer which binds Holliday junction (HJ) DNA. The HJ becomes 2-fold symmetrical on binding to RuvC with unstacked arms; it has a different conformation from HJ DNA in complex with RuvA. In the full resolvosome a probable DNA-RuvA(4)-RuvB(12)-RuvC(2) complex forms which resolves the HJ. Mg(2+) is required as a cofactor.

It is found in the cytoplasm. It catalyses the reaction Endonucleolytic cleavage at a junction such as a reciprocal single-stranded crossover between two homologous DNA duplexes (Holliday junction).. Functionally, the RuvA-RuvB-RuvC complex processes Holliday junction (HJ) DNA during genetic recombination and DNA repair. Endonuclease that resolves HJ intermediates. Cleaves cruciform DNA by making single-stranded nicks across the HJ at symmetrical positions within the homologous arms, yielding a 5'-phosphate and a 3'-hydroxyl group; requires a central core of homology in the junction. The consensus cleavage sequence is 5'-(A/T)TT(C/G)-3'. Cleavage occurs on the 3'-side of the TT dinucleotide at the point of strand exchange. HJ branch migration catalyzed by RuvA-RuvB allows RuvC to scan DNA until it finds its consensus sequence, where it cleaves and resolves the cruciform DNA. The protein is Crossover junction endodeoxyribonuclease RuvC of Parasynechococcus marenigrum (strain WH8102).